The following is a 1173-amino-acid chain: Ubiquitin conjugation factor E4 B (1173 aa).

At Met-1 the chain carries N-acetylmethionine. The disordered stretch occupies residues 1–155 (MEELSADEIR…EPSSGPEVSE (155 aa)). A compositionally biased stretch (low complexity) spans 16 to 33 (RLAGGQTSQPTTPLTSPQ). A phosphoserine mark is found at Ser-23 and Ser-31. Over residues 51–64 (QSLGLNVHNMTPAT) the composition is skewed to polar residues. Low complexity predominate over residues 76-99 (SQSSEGVSSLSSSPSNSLETQSQS). Residues Ser-84, Ser-88, Ser-90, Ser-101, Ser-103, Ser-105, and Ser-124 each carry the phosphoserine modification. The span at 134–147 (NDRREKRSLSDKEP) shows a compositional bias: basic and acidic residues. Phosphoserine is present on residues Ser-238, Ser-674, and Ser-840. Positions 928 to 948 (NKEQWDQLPRDQQQARQSQLA) are disordered. The span at 937-948 (RDQQQARQSQLA) shows a compositional bias: low complexity. The region spanning 1098–1171 (DAPDEFRDPL…QAWMREKQSS (74 aa)) is the U-box domain. At Ser-1136 the chain carries Phosphoserine.

Belongs to the ubiquitin conjugation factor E4 family. In terms of assembly, interacts with VCP. Interacts with STUB1/CHIP and UNC45B. In terms of processing, proteolytically cleaved by caspases during apoptosis. Cleaved efficiently at Asp-123 by caspase-6 and granzyme B. Cleaved with approximately 10-fold less efficiency at Asp-109 by caspase-3 and caspase-7. Expressed predominantly in neuronal tissues. Also detected in liver, heart, brain, kidney and testis.

The protein localises to the cytoplasm. It localises to the nucleus. It carries out the reaction S-ubiquitinyl-[E2 ubiquitin-conjugating enzyme]-L-cysteine + [acceptor protein]-L-lysine = [E2 ubiquitin-conjugating enzyme]-L-cysteine + N(6)-ubiquitinyl-[acceptor protein]-L-lysine.. It functions in the pathway protein modification; protein ubiquitination. Ubiquitin-protein ligase that probably functions as an E3 ligase in conjunction with specific E1 and E2 ligases. May also function as an E4 ligase mediating the assembly of polyubiquitin chains on substrates ubiquitinated by another E3 ubiquitin ligase. May regulate myosin assembly in striated muscles together with STUB1 and VCP/p97 by targeting myosin chaperone UNC45B for proteasomal degradation. This is Ubiquitin conjugation factor E4 B from Mus musculus (Mouse).